A 189-amino-acid polypeptide reads, in one-letter code: Parkinson disease protein 7 homolog (189 aa).

Ala-2 carries the post-translational modification N-acetylalanine. 2 S-palmitoyl cysteine lipidation sites follow: Cys-46 and Cys-53. Tyr-67 is modified (phosphotyrosine). The active-site Nucleophile is the Cys-106. Cys-106 is subject to Cysteine sulfinic acid (-SO2H); alternate. Cys-106 is lipidated: S-palmitoyl cysteine; alternate. His-126 is a catalytic residue. Lys-130 is covalently cross-linked (Glycyl lysine isopeptide (Lys-Gly) (interchain with G-Cter in SUMO)). Lys-148 carries the post-translational modification N6-acetyllysine. Lys-182 carries the post-translational modification N6-succinyllysine.

Belongs to the peptidase C56 family. In terms of assembly, homodimer. Binds EFCAB6/DJBP and PIAS2. Part of a ternary complex containing PARK7, EFCAB6/DJBP and AR. Interacts (via N-terminus) with OTUD7B. Interacts with BBS1, HIPK1, CLCF1 and MTERF. Forms a complex with PINK1 and PRKN. Interacts (via C-terminus) with NCF1; the interaction is enhanced by LPS and modulates NCF1 phosphorylation and membrane translocation. Interacts with NENF. The cofactor is Deglycase activity does not require glutathione as a cofactor, however, glycated glutathione constitutes a PARK7 substrate.. Post-translationally, sumoylated on Lys-130 by PIAS2 or PIAS4; which is essential for cell-growth promoting activity and transforming activity. In terms of processing, undergoes cleavage of a C-terminal peptide and subsequent activation of protease activity in response to oxidative stress.

Its subcellular location is the cell membrane. The protein localises to the cytoplasm. The protein resides in the nucleus. It localises to the membrane raft. It is found in the mitochondrion. Its subcellular location is the endoplasmic reticulum. It catalyses the reaction N(omega)-(1-hydroxy-2-oxopropyl)-L-arginyl-[protein] + H2O = lactate + L-arginyl-[protein] + H(+). The catalysed reaction is N(6)-(1-hydroxy-2-oxopropyl)-L-lysyl-[protein] + H2O = lactate + L-lysyl-[protein] + H(+). It carries out the reaction S-(1-hydroxy-2-oxopropyl)-L-cysteinyl-[protein] + H2O = lactate + L-cysteinyl-[protein] + H(+). The enzyme catalyses N(omega)-(1-hydroxy-2-oxoethyl)-L-arginyl-[protein] + H2O = L-arginyl-[protein] + glycolate + H(+). It catalyses the reaction N(6)-(1-hydroxy-2-oxoethyl)-L-lysyl-[protein] + H2O = glycolate + L-lysyl-[protein] + H(+). The catalysed reaction is S-(1-hydroxy-2-oxoethyl)-L-cysteinyl-[protein] + H2O = glycolate + L-cysteinyl-[protein] + H(+). It carries out the reaction N(2)-(1-hydroxy-2-oxopropyl)-dGTP + H2O = lactate + dGTP + H(+). The enzyme catalyses N(2)-(1-hydroxy-2-oxopropyl)-GTP + H2O = lactate + GTP + H(+). It catalyses the reaction N(2)-(1-hydroxy-2-oxopropyl)-GDP + H2O = lactate + GDP + H(+). The catalysed reaction is N(2)-(1-hydroxy-2-oxopropyl)-GMP + H2O = lactate + GMP + H(+). It carries out the reaction N(2)-(1-hydroxy-2-oxoethyl)-dGTP + H2O = dGTP + glycolate + H(+). The enzyme catalyses N(2)-(1-hydroxy-2-oxoethyl)-GTP + H2O = glycolate + GTP + H(+). It catalyses the reaction N(2)-(1-hydroxy-2-oxoethyl)-GDP + H2O = glycolate + GDP + H(+). The catalysed reaction is N(2)-(1-hydroxy-2-oxoethyl)-GMP + H2O = glycolate + GMP + H(+). It carries out the reaction an N(2)-(1-hydroxy-2-oxopropyl)-guanosine in RNA + H2O = a guanosine in RNA + lactate + H(+). The enzyme catalyses an N(2)-(1-hydroxy-2-oxopropyl)-2'-deoxyguanosine in DNA + H2O = a 2'-deoxyguanosine in DNA + lactate + H(+). It catalyses the reaction an N(2)-(1-hydroxy-2-oxoethyl)-guanosine in RNA + H2O = a guanosine in RNA + glycolate + H(+). The catalysed reaction is an N(2)-(1-hydroxy-2-oxoethyl)-2'-deoxyguanosine in DNA + H2O = a 2'-deoxyguanosine in DNA + glycolate + H(+). Its function is as follows. Multifunctional protein with controversial molecular function which plays an important role in cell protection against oxidative stress and cell death acting as oxidative stress sensor and redox-sensitive chaperone and protease. It is involved in neuroprotective mechanisms like the stabilization of NFE2L2 and PINK1 proteins, male fertility as a positive regulator of androgen signaling pathway as well as cell growth and transformation through, for instance, the modulation of NF-kappa-B signaling pathway. Has been described as a protein and nucleotide deglycase that catalyzes the deglycation of the Maillard adducts formed between amino groups of proteins or nucleotides and reactive carbonyl groups of glyoxals. But this function is rebuted by other works. As a protein deglycase, repairs methylglyoxal- and glyoxal-glycated proteins, and releases repaired proteins and lactate or glycolate, respectively. Deglycates cysteine, arginine and lysine residues in proteins, and thus reactivates these proteins by reversing glycation by glyoxals. Acts on early glycation intermediates (hemithioacetals and aminocarbinols), preventing the formation of advanced glycation endproducts (AGE) that cause irreversible damage. Also functions as a nucleotide deglycase able to repair glycated guanine in the free nucleotide pool (GTP, GDP, GMP, dGTP) and in DNA and RNA. Is thus involved in a major nucleotide repair system named guanine glycation repair (GG repair), dedicated to reversing methylglyoxal and glyoxal damage via nucleotide sanitization and direct nucleic acid repair. Protects histones from adduction by methylglyoxal, controls the levels of methylglyoxal-derived argininine modifications on chromatin. Able to remove the glycations and restore histone 3, histone glycation disrupts both local and global chromatin architecture by altering histone-DNA interactions as well as histone acetylation and ubiquitination levels. Displays a very low glyoxalase activity that may reflect its deglycase activity. Eliminates hydrogen peroxide and protects cells against hydrogen peroxide-induced cell death. Required for correct mitochondrial morphology and function as well as for autophagy of dysfunctional mitochondria. Plays a role in regulating expression or stability of the mitochondrial uncoupling proteins SLC25A14 and SLC25A27 in dopaminergic neurons of the substantia nigra pars compacta and attenuates the oxidative stress induced by calcium entry into the neurons via L-type channels during pacemaking. Regulates astrocyte inflammatory responses, may modulate lipid rafts-dependent endocytosis in astrocytes and neuronal cells. In pancreatic islets, involved in the maintenance of mitochondrial reactive oxygen species (ROS) levels and glucose homeostasis in an age- and diet dependent manner. Protects pancreatic beta cells from cell death induced by inflammatory and cytotoxic setting. Binds to a number of mRNAs containing multiple copies of GG or CC motifs and partially inhibits their translation but dissociates following oxidative stress. Metal-binding protein able to bind copper as well as toxic mercury ions, enhances the cell protection mechanism against induced metal toxicity. In macrophages, interacts with the NADPH oxidase subunit NCF1 to direct NADPH oxidase-dependent ROS production, and protects against sepsis. The protein is Parkinson disease protein 7 homolog of Chlorocebus aethiops (Green monkey).